The chain runs to 440 residues: MDNDILKRLDPEVFEAIANETKRQTETLELIASENFTSKAVMEACGSVMTNKYAEGYPGKRYYGGCEFVDVAENLARDRAKKLFGCEYVNVQPHSGSSANMAVLFAVLKPGDAIMGLDLSHGGHLTHGSKVNFSGQFFDAHSYGVDKETGIIDMNKVEEMARRVKPKLIITGASAYSQGFDFKAFREVADKVGALLMADIAHPAGLVAAGLSANPMPHCHFVTTTTHKTLRGPRGGMIMMGKDFENPLGLTINTKNGSRVKMMSEVIDAEVMPGIQGGPLMHIIAGKAVAFGEALQPEFKAYAQQIKDNAAAMAAKFLAAGYHIVSGGTKNHLMLLDLRNKNVNGKVAENLLHEAGITVNKNMVPFDDKSPFVTSGIRIGTPAMTTRGMKVAEAEKIVEFIDRVISAANDANVADVCKAVRAEVRELCLGFPLNNYGSLV.

(6S)-5,6,7,8-tetrahydrofolate is bound by residues leucine 119 and 123–125 (GHL). Residue lysine 228 is modified to N6-(pyridoxal phosphate)lysine. (6S)-5,6,7,8-tetrahydrofolate is bound at residue 370-372 (SPF).

This sequence belongs to the SHMT family. As to quaternary structure, homodimer. Pyridoxal 5'-phosphate serves as cofactor.

Its subcellular location is the cytoplasm. It carries out the reaction (6R)-5,10-methylene-5,6,7,8-tetrahydrofolate + glycine + H2O = (6S)-5,6,7,8-tetrahydrofolate + L-serine. It participates in one-carbon metabolism; tetrahydrofolate interconversion. The protein operates within amino-acid biosynthesis; glycine biosynthesis; glycine from L-serine: step 1/1. In terms of biological role, catalyzes the reversible interconversion of serine and glycine with tetrahydrofolate (THF) serving as the one-carbon carrier. This reaction serves as the major source of one-carbon groups required for the biosynthesis of purines, thymidylate, methionine, and other important biomolecules. Also exhibits THF-independent aldolase activity toward beta-hydroxyamino acids, producing glycine and aldehydes, via a retro-aldol mechanism. This Chlorobaculum tepidum (strain ATCC 49652 / DSM 12025 / NBRC 103806 / TLS) (Chlorobium tepidum) protein is Serine hydroxymethyltransferase.